Reading from the N-terminus, the 301-residue chain is J domain-containing protein 1 (301 aa).

The 93-residue stretch at 58 to 150 (TPYDIFGIPK…KKKIVYDTTR (93 aa)) folds into the J domain. Residues 208 to 228 (WTVIGIICGLAICIEGTALLA) traverse the membrane as a helical segment.

This sequence belongs to the DnaJ family.

The protein resides in the mitochondrion membrane. In terms of biological role, probable chaperone. The sequence is that of J domain-containing protein 1 (JID1) from Saccharomyces cerevisiae (strain ATCC 204508 / S288c) (Baker's yeast).